We begin with the raw amino-acid sequence, 527 residues long: Peptide chain release factor 3 (527 aa).

The tr-type G domain occupies 9–277; it reads AKRRTFAIIS…AVVDWAPRPL (269 aa). Residues 18–25, 86–90, and 140–143 contribute to the GTP site; these read SHPDAGKT, DTPGH, and NKLD.

This sequence belongs to the TRAFAC class translation factor GTPase superfamily. Classic translation factor GTPase family. PrfC subfamily.

Its subcellular location is the cytoplasm. Increases the formation of ribosomal termination complexes and stimulates activities of RF-1 and RF-2. It binds guanine nucleotides and has strong preference for UGA stop codons. It may interact directly with the ribosome. The stimulation of RF-1 and RF-2 is significantly reduced by GTP and GDP, but not by GMP. The protein is Peptide chain release factor 3 of Ectopseudomonas mendocina (strain ymp) (Pseudomonas mendocina).